We begin with the raw amino-acid sequence, 1202 residues long: Caskin-2 (1202 aa).

6 ANK repeats span residues 48–77 (DGFS…TVDI), 81–110 (NGMR…AVNA), 114–143 (DGQI…NPCL), 147–176 (AKKT…CVAL), 188–217 (NYTT…EINR), and 220–249 (KTGT…DVNI). At Tyr253 the chain carries Phosphotyrosine. In terms of domain architecture, SH3 spans 281-347 (SGILKVRALK…PPGIVEVVSK (67 aa)). A disordered region spans residues 355–460 (RLPSAPTPLR…GLHPPSLADN (106 aa)). 6 positions are modified to phosphoserine: Ser358, Ser393, Ser396, Ser403, Ser406, and Ser409. The segment covering 415 to 425 (SAGSGQSSEGT) has biased composition (polar residues). Position 471 is a phosphoserine (Ser471). 2 SAM domains span residues 489-552 (KDAQ…LSIA) and 558-622 (YIPT…LAEL). 2 disordered regions span residues 676 to 1104 (LQAA…APKP) and 1116 to 1181 (GPKL…STKH). Residue Ser725 is modified to Phosphoserine. Residues 731–740 (NLPEGTERPP) are compositionally biased toward basic and acidic residues. Residues 765–774 (SPAPGPPPGA) are compositionally biased toward pro residues. Phosphoserine is present on residues Ser858, Ser877, Ser878, and Ser892. Residues 913 to 923 (PSEPPGPPAPA) show a composition bias toward pro residues. Over residues 940 to 949 (PPSRGSSGEG) the composition is skewed to low complexity. Pro residues-rich tracts occupy residues 966–978 (PAGP…PVPP) and 1018–1030 (PAAP…PGES). The segment covering 1031 to 1051 (PPASSLPQPEPSSLPAQGVPT) has biased composition (low complexity). Pro residues-rich tracts occupy residues 1052–1068 (PLAP…PCPG) and 1124–1133 (GPRPVPPPRP). A compositionally biased stretch (polar residues) spans 1135–1151 (STGTVGPGQAQQRLEQT). The segment covering 1161–1172 (AAEKSIGTKEQE) has biased composition (basic and acidic residues).

As to quaternary structure, may not bind CASK.

The protein resides in the cytoplasm. The sequence is that of Caskin-2 (CASKIN2) from Homo sapiens (Human).